Here is a 343-residue protein sequence, read N- to C-terminus: L-threonine 3-dehydrogenase (343 aa).

Cys-38 provides a ligand contact to Zn(2+). Catalysis depends on charge relay system residues Thr-40 and His-43. His-63, Glu-64, Cys-93, Cys-96, Cys-99, and Cys-107 together coordinate Zn(2+). Residues Ile-175, Asp-195, Arg-200, 262 to 264 (LGI), and 286 to 287 (IY) contribute to the NAD(+) site.

It belongs to the zinc-containing alcohol dehydrogenase family. As to quaternary structure, homotetramer. Zn(2+) is required as a cofactor.

It is found in the cytoplasm. The catalysed reaction is L-threonine + NAD(+) = (2S)-2-amino-3-oxobutanoate + NADH + H(+). It participates in amino-acid degradation; L-threonine degradation via oxydo-reductase pathway; glycine from L-threonine: step 1/2. In terms of biological role, catalyzes the NAD(+)-dependent oxidation of L-threonine to 2-amino-3-ketobutyrate. In Burkholderia mallei (strain NCTC 10247), this protein is L-threonine 3-dehydrogenase.